Here is a 601-residue protein sequence, read N- to C-terminus: MEGADLLTAGVLFLFAAVAAVPLAARLGIGAVLGYLLAGIAIGPWGLGFISDVDEILHFSELGVVFLMFIIGLELNPSRLWQLRRSIFGVGAAQVLLSAAVLAGLLMLADFLWQAAVVGGIGLAMSSTAMALQLMREKGMNRSESGQLGFSVLLFQDLAVIPALALVPLLAGSADEHFDWFKVAMKVLAFAVMLIGGRYLLRPVFRFIAASGVREVFTAATLLLVLSAALFMDALGLSMALGTFIAGVLLAESEYRHELENAIDPFKGLLLGLFFISVGMSLNLGVLYTHLLWVAASVVILVAIKMLTLYLLARLYGIRSSERMQFASVLSQGGEFAFVLFSTASSQRLFQGDQMALLLVTVTLSMMTTPLLMKGIDKWLSRRLNGPEENDEKPWVEDDKPQVIVVGFGRFGQVIARLLMANKMRITVLERDIGAVNLMRKYGYKVYYGDATQVELLRSAGAEAAESIVITCNEPEDTMKLVALCQQHFPHLHILARARGRVEAHELLQAGVTQFSRETFSSALELGRKTLVSLGMHPHQAQRAQLHFRRLDMRMLRELIPEHSDMVQISRAREARRELEEIFQREMQQERRQLDGWDEFE.

Transmembrane regions (helical) follow at residues 4-24, 29-49, 55-75, 87-107, 111-131, 152-172, 177-197, 207-227, 230-250, 262-282, 284-304, 324-344, and 356-376; these read ADLL…VPLA, IGAV…GLGF, EILH…GLEL, IFGV…GLLM, FLWQ…TAMA, VLLF…LLAG, HFDW…LIGG, FIAA…LVLS, LFMD…GVLL, AIDP…GMSL, LGVL…LVAI, MQFA…FSTA, and ALLL…MKGI. In terms of domain architecture, RCK N-terminal spans 400–519; sequence KPQVIVVGFG…AGVTQFSRET (120 aa).

The protein belongs to the monovalent cation:proton antiporter 2 (CPA2) transporter (TC 2.A.37) family. KefB subfamily. Interacts with the regulatory subunit KefG.

Its subcellular location is the cell inner membrane. Its function is as follows. Pore-forming subunit of a potassium efflux system that confers protection against electrophiles. Catalyzes K(+)/H(+) antiport. The protein is Glutathione-regulated potassium-efflux system protein KefB of Salmonella schwarzengrund (strain CVM19633).